Consider the following 144-residue polypeptide: MGLKLSGRYIFLVLAVHLAYLLQAVKATGKCDAVFKGLSDCMLTLGDKVANYPQDLEEKKNLDTICSYWDDFHVCTVTALADCQEGAADIWEKLKRQSKNLNIQGSLFELCPGSAGAPGQRLLFPAFLPLLMVFLSTLFILVLQ.

An N-terminal signal peptide occupies residues 1–27 (MGLKLSGRYIFLVLAVHLAYLLQAVKA). Residue Ser-114 is the site of GPI-anchor amidated serine attachment. Positions 115 to 144 (AGAPGQRLLFPAFLPLLMVFLSTLFILVLQ) are cleaved as a propeptide — removed in mature form.

Belongs to the neuritin family. As to expression, expressed in sensory regions of the brain including the visual, auditory and olfactory systems. Within the retina, only expressed in the retinal ganglion cells. Concentrated in axon tracts including retinal axons.

The protein resides in the cell membrane. In terms of biological role, modulates postsynaptic dendritic arbor elaboration and synaptic maturation. This chain is Neuritin-A (nrn1-a), found in Xenopus laevis (African clawed frog).